A 977-amino-acid polypeptide reads, in one-letter code: MKPKSVSEIREIFLNYFKDKSHNVVPSSSLLPAGDPTLLFTTAGMVQFKPLFTGAVELPYTRATSCQKCLRTTDLEVVGKTERHCTFFEMLGNFSFGNYFKEEAIEYALDCSVNHFGFDKNKIWVTVYTDDDEAEKIWLSKGIPKERITRLGKKDNFWGPAGDSGACGPCSELYLDRGIEKGGPNCATSGTCKPGCDCDRFLEFWNIVFNQFNQDTEGNLHPLKQTGIDTGSGLERVALLLQEVDSVYDTNELRKIISFYEELSGISYEDKTLSEISEKKNNNQQISSQVRNETKSIQDSRKTAFRVVTDHIRSVLFSIGDGIYPDRTGRGYVIRRLIRRATLFGRKLNFKEPFLYKLVDKVIEIYKARYPELQRNAAAITKTILVEEELFLKTLELGLEKIESLVQKTKAGGKTIFSGADAFLLYGTYGFPAEMTEEIVAEQGLDFDKKGFQEELEKDRQFSRESWKVNKVSLMTGLNVDKTEFLGYSSVSGKGNITHLFYNSPKSSNSLSQVDSKLQSSTPAGTGSYDSKQVSSLKEGQAGAIVLNKTPFYPEGGGQVGDIGFLRQGKNVFKVFDTQKENDSIIHFGEVLSGEFIVSQELEAEVEITRRERLKFHHSGTHLLNGALRTLLGDHVLQKGSIVSPEYLRFDFSHPSSLTSEEIRQIESWVNESIRKNFPVETKELSIEDAKKTGAVATFGEKYGERVRVVQMGDASIEFCGGTHVSRTGEIGYFFIKKESSPGAGNRRIEGVCGPAVIETFQNRFSELTESVQNLNLKIKSELGEEGTKILILSFIPGPDEIREKLEKEGASAVSFFRDLSENIATKIEENTSSFLKIKKNLAERDFENNTSVIENVLASSVDTGIGKIVSAIFEDKDPNSLKGLSDNLKVREKNLLVILGSRNSENASIVITCSSELTLKGIHCGNLIKTACELLGGKGGGRPDMAQGGGKEKQNLESAIAGVINEAKQILTGERV.

Residues 512-535 (SQVDSKLQSSTPAGTGSYDSKQVS) are disordered. Positions 618, 622, 720, and 724 each coordinate Zn(2+).

This sequence belongs to the class-II aminoacyl-tRNA synthetase family. Requires Zn(2+) as cofactor.

The protein localises to the cytoplasm. The enzyme catalyses tRNA(Ala) + L-alanine + ATP = L-alanyl-tRNA(Ala) + AMP + diphosphate. Functionally, catalyzes the attachment of alanine to tRNA(Ala) in a two-step reaction: alanine is first activated by ATP to form Ala-AMP and then transferred to the acceptor end of tRNA(Ala). Also edits incorrectly charged Ser-tRNA(Ala) and Gly-tRNA(Ala) via its editing domain. This chain is Alanine--tRNA ligase, found in Leptospira interrogans serogroup Icterohaemorrhagiae serovar copenhageni (strain Fiocruz L1-130).